A 697-amino-acid polypeptide reads, in one-letter code: Elongation factor G 2 (697 aa).

Positions 5–280 (SKYRNIGIFA…AVVDYLPAPD (276 aa)) constitute a tr-type G domain. GTP-binding positions include 14–21 (AHVDAGKT), 78–82 (DTPGH), and 132–135 (NKLD).

Belongs to the TRAFAC class translation factor GTPase superfamily. Classic translation factor GTPase family. EF-G/EF-2 subfamily.

It is found in the cytoplasm. Catalyzes the GTP-dependent ribosomal translocation step during translation elongation. During this step, the ribosome changes from the pre-translocational (PRE) to the post-translocational (POST) state as the newly formed A-site-bound peptidyl-tRNA and P-site-bound deacylated tRNA move to the P and E sites, respectively. Catalyzes the coordinated movement of the two tRNA molecules, the mRNA and conformational changes in the ribosome. The sequence is that of Elongation factor G 2 (fusB) from Shewanella oneidensis (strain ATCC 700550 / JCM 31522 / CIP 106686 / LMG 19005 / NCIMB 14063 / MR-1).